The primary structure comprises 31 residues: U14-ctenitoxin-Co1a (31 aa).

Disulfide bonds are present. Expressed by the venom gland.

Its subcellular location is the secreted. Omega-agatoxins are antagonists of voltage-gated calcium channels (Cav). This chain is U14-ctenitoxin-Co1a, found in Ctenus ornatus (Brazilian spider).